We begin with the raw amino-acid sequence, 332 residues long: Ribosomal RNA small subunit methyltransferase H (332 aa).

Residues 38 to 40, D56, F83, D104, and Q111 each bind S-adenosyl-L-methionine; that span reads GGY. Positions 309-332 are disordered; sequence TETPFSEDISRPDTHIPRSRRQSA.

The protein belongs to the methyltransferase superfamily. RsmH family.

It localises to the cytoplasm. The catalysed reaction is cytidine(1402) in 16S rRNA + S-adenosyl-L-methionine = N(4)-methylcytidine(1402) in 16S rRNA + S-adenosyl-L-homocysteine + H(+). In terms of biological role, specifically methylates the N4 position of cytidine in position 1402 (C1402) of 16S rRNA. The protein is Ribosomal RNA small subunit methyltransferase H of Zymomonas mobilis subsp. mobilis (strain ATCC 31821 / ZM4 / CP4).